The sequence spans 392 residues: DNA replication and repair protein RecF (392 aa).

33-40 (GANGAGKT) is an ATP binding site.

Belongs to the RecF family.

The protein localises to the cytoplasm. Its function is as follows. The RecF protein is involved in DNA metabolism; it is required for DNA replication and normal SOS inducibility. RecF binds preferentially to single-stranded, linear DNA. It also seems to bind ATP. In Caulobacter sp. (strain K31), this protein is DNA replication and repair protein RecF.